Here is a 230-residue protein sequence, read N- to C-terminus: Protein GrpE (230 aa).

Disordered regions lie at residues Met-1 to Lys-28 and Gly-209 to Ala-230. The segment covering Asn-221–Ala-230 has biased composition (polar residues).

It belongs to the GrpE family. Homodimer.

Its subcellular location is the cytoplasm. Functionally, participates actively in the response to hyperosmotic and heat shock by preventing the aggregation of stress-denatured proteins, in association with DnaK and GrpE. It is the nucleotide exchange factor for DnaK and may function as a thermosensor. Unfolded proteins bind initially to DnaJ; upon interaction with the DnaJ-bound protein, DnaK hydrolyzes its bound ATP, resulting in the formation of a stable complex. GrpE releases ADP from DnaK; ATP binding to DnaK triggers the release of the substrate protein, thus completing the reaction cycle. Several rounds of ATP-dependent interactions between DnaJ, DnaK and GrpE are required for fully efficient folding. This chain is Protein GrpE, found in Brucella ovis (strain ATCC 25840 / 63/290 / NCTC 10512).